The primary structure comprises 149 residues: MAERLSEEQIAEFKEAFSLFDRDGDGCITTMELGTVMRSLGQNPTEAELQDMVGEVDADGSGTIDFPEFLSLMARKMRDSDSEEEIREAFRVFDKDGNGYISAAELRHVMTNLGEKLTDEEVDEMIKEADCNNDGQVNYEEFVRMMTEK.

4 consecutive EF-hand domains span residues 8-43, 44-79, 81-116, and 117-149; these read EQIAEFKEAFSLFDRDGDGCITTMELGTVMRSLGQN, PTEAELQDMVGEVDADGSGTIDFPEFLSLMARKMRD, DSEEEIREAFRVFDKDGNGYISAAELRHVMTNLGEK, and LTDEEVDEMIKEADCNNDGQVNYEEFVRMMTEK. Ca(2+) is bound by residues D21, D23, D25, C27, E32, D57, D59, S61, T63, E68, D94, D96, N98, Y100, and E105. The residue at position 116 (K116) is an N6,N6,N6-trimethyllysine. Ca(2+) contacts are provided by D130, N132, D134, Q136, and E141.

The protein belongs to the calmodulin family.

This Gallus gallus (Chicken) protein is Calmodulin, striated muscle (CCM1).